Reading from the N-terminus, the 401-residue chain is Dual-specificity RNA methyltransferase RlmN (401 aa).

Glutamate 114 functions as the Proton acceptor in the catalytic mechanism. A Radical SAM core domain is found at 120–365 (DKGRGTLCVS…TIVRRTRGDD (246 aa)). A disulfide bridge links cysteine 127 with cysteine 370. [4Fe-4S] cluster-binding residues include cysteine 134, cysteine 138, and cysteine 141. Residues 187–188 (GE), serine 219, 241–243 (SLH), and asparagine 327 each bind S-adenosyl-L-methionine. The active-site S-methylcysteine intermediate is the cysteine 370.

This sequence belongs to the radical SAM superfamily. RlmN family. The cofactor is [4Fe-4S] cluster.

The protein resides in the cytoplasm. It carries out the reaction adenosine(2503) in 23S rRNA + 2 reduced [2Fe-2S]-[ferredoxin] + 2 S-adenosyl-L-methionine = 2-methyladenosine(2503) in 23S rRNA + 5'-deoxyadenosine + L-methionine + 2 oxidized [2Fe-2S]-[ferredoxin] + S-adenosyl-L-homocysteine. The enzyme catalyses adenosine(37) in tRNA + 2 reduced [2Fe-2S]-[ferredoxin] + 2 S-adenosyl-L-methionine = 2-methyladenosine(37) in tRNA + 5'-deoxyadenosine + L-methionine + 2 oxidized [2Fe-2S]-[ferredoxin] + S-adenosyl-L-homocysteine. In terms of biological role, specifically methylates position 2 of adenine 2503 in 23S rRNA and position 2 of adenine 37 in tRNAs. m2A2503 modification seems to play a crucial role in the proofreading step occurring at the peptidyl transferase center and thus would serve to optimize ribosomal fidelity. In Xanthomonas oryzae pv. oryzae (strain MAFF 311018), this protein is Dual-specificity RNA methyltransferase RlmN.